We begin with the raw amino-acid sequence, 427 residues long: Glutamate-1-semialdehyde 2,1-aminomutase (427 aa).

Lysine 265 carries the N6-(pyridoxal phosphate)lysine modification.

This sequence belongs to the class-III pyridoxal-phosphate-dependent aminotransferase family. HemL subfamily. Homodimer. The cofactor is pyridoxal 5'-phosphate.

The protein resides in the cytoplasm. It carries out the reaction (S)-4-amino-5-oxopentanoate = 5-aminolevulinate. It participates in porphyrin-containing compound metabolism; protoporphyrin-IX biosynthesis; 5-aminolevulinate from L-glutamyl-tRNA(Glu): step 2/2. The protein is Glutamate-1-semialdehyde 2,1-aminomutase of Nitratiruptor sp. (strain SB155-2).